The chain runs to 274 residues: 2,3,4,5-tetrahydropyridine-2,6-dicarboxylate N-succinyltransferase (274 aa).

The protein belongs to the transferase hexapeptide repeat family.

It is found in the cytoplasm. The enzyme catalyses (S)-2,3,4,5-tetrahydrodipicolinate + succinyl-CoA + H2O = (S)-2-succinylamino-6-oxoheptanedioate + CoA. It participates in amino-acid biosynthesis; L-lysine biosynthesis via DAP pathway; LL-2,6-diaminopimelate from (S)-tetrahydrodipicolinate (succinylase route): step 1/3. The chain is 2,3,4,5-tetrahydropyridine-2,6-dicarboxylate N-succinyltransferase from Salmonella agona (strain SL483).